Reading from the N-terminus, the 135-residue chain is MATTKKLFVDRMTFILKLLKEDVDFAPCIRAAYIADGMKEFAFMKPDMDTPLEMALQILLKNHQGQELTSSQILGAVIYTYRYINELLTRHEKDRAVFDWAITAGLCGVNQYNWLKFQKDILSYKSITRGIPFSQ.

This is an uncharacterized protein from Magallana gigas (Pacific oyster).